We begin with the raw amino-acid sequence, 37 residues long: Large ribosomal subunit protein bL36c (37 aa).

It belongs to the bacterial ribosomal protein bL36 family.

The protein resides in the plastid. It is found in the chloroplast. The sequence is that of Large ribosomal subunit protein bL36c (rpl36) from Chlamydomonas reinhardtii (Chlamydomonas smithii).